The primary structure comprises 770 residues: Disabled homolog 2 (770 aa).

The segment covering 1 to 16 (MSNEVETSATNGQPDQ) has biased composition (polar residues). Residues 1-38 (MSNEVETSATNGQPDQQAAPKAPSKKEKKKGPEKTDEY) form a disordered region. At Ser2 the chain carries N-acetylserine. Residue Ser2 is modified to Phosphoserine. A PID domain is found at 45-196 (GDGVKYKAKL…KAVENGSEAL (152 aa)). At Tyr170 the chain carries Phosphotyrosine. Ser193 carries the phosphoserine modification. Residues 230–447 (ESKDILLVDL…KPGRGRRTAK (218 aa)) form a required for localization to clathrin-coated pits region. Disordered regions lie at residues 284-482 (LNFF…LQPN) and 604-629 (VSTQ…AGPP). 2 consecutive short sequence motifs (DPF) follow at residues 293-295 (DPF) and 298-300 (DPF). Positions 302–313 (QPDQSTPSSFDS) are enriched in polar residues. A phosphoserine; in mitosis mark is found at Ser326 and Ser328. The span at 366–396 (FSSSQTQPAVRTQNGVSEREQNGFSVKSSPN) shows a compositional bias: polar residues. Ser401 is subject to Phosphoserine. Polar residues-rich tracts occupy residues 407–425 (SIQN…SSPH), 466–480 (PSGQ…TALQ), and 604–616 (VSTQ…SSLL). A sufficient for interaction with GRB2 region spans residues 604 to 732 (VSTQPPSMHS…SLPVTKSTDN (129 aa)). Residues 619-627 (PPQPPPRAG) form a required for interaction with CSK region. The tract at residues 649–770 (KDVKEMFKDF…YRDPFGNPFA (122 aa)) is required for interaction with MYO6. The tract at residues 663-671 (PPAVPARKG) is required for interaction with GRB2 and CSK. Ser675, Ser723, and Ser729 each carry phosphoserine. A sufficient for interaction with SH3KBP1 SH3 domain region spans residues 709-725 (NKINEPPKPAPRQVSLP). The disordered stretch occupies residues 742–770 (SFGSSQASVASSQPVSSEMYRDPFGNPFA). Residues 745-758 (SSQASVASSQPVSS) show a composition bias toward low complexity.

Interacts (via NPXY motif) with DAB2 (via PID domain). Can interact (via PID domain) with LDLR, APP, APLP1 and APLP2, and weakly with INPP5D (via NPXY motifs); the interaction is impaired by tyrosine phosphorylation of the respective NPXY motifs. Can weakly interact (via PID domain) with LRP1 (via NPXY motif); the interaction is enhanced by tyrosine phosphorylation of the NPXY motif. Interacts with LRP2 (via NPXY motif); the interaction is not affected by tyrosine phosphorylation of the NPXY motif. Interacts with clathrin; in vitro can assemble clathrin triskelia into polyhedral coats. Interacts with AP2A2, ITGB1, ITGB3, ITGB5, PIAS2, DAB2IP, NOSTRIN, FCHO1, DVL3, EPS15, ITSN1 and EPS15L1. Interacts with SH3KBP1 (via SH3 domains). Interacts with GRB2; competes with SOS1 for binding to GRB2 and the interaction is enhanced by EGF and NT-3 stimulation. Interacts with MAP3K7; the interaction is induced by TGF-beta stimulation and may mediate TGF-beta stimulated JNK activation. Interacts with AXIN1 and PPP1CA; the interactions are mutually exclusive. Interacts with the globular tail of MYO6. Interacts (via DPF motifs) with FCHO2; the interaction is direct and required for DAB2-mediated LDLR endocytosis. Interacts with LRP6; the interaction involves LRP6 phosphorylation by CK2 and sequesters LRP6 towards clathrin-mediated endocytosis. Associates with the TGF-beta receptor complex. Interacts with SMAD2 and SMAD3; the interactions are enhanced upon TGF-beta stimulation. Interacts with GRB2; the interaction is enhanced by EGF and NT-3 stimulation. Interacts with SRC; the interaction is enhanced by EGF stimulation. In terms of processing, phosphorylated. Phosphorylation during mitosis is leading to membrane displacement. As to expression, expressed in deep invaginations, inclusion cysts and the surface epithelial cells of the ovary. Also expressed in breast epithelial cells, spleen, thymus, prostate, testis, macrophages, fibroblasts, lung epithelial cells, placenta, brain stem, heart and small intestine. Expressed in kidney proximal tubular epithelial cells (at protein level).

The protein localises to the cytoplasm. It localises to the cytoplasmic vesicle. The protein resides in the clathrin-coated vesicle membrane. Its subcellular location is the membrane. It is found in the clathrin-coated pit. In terms of biological role, adapter protein that functions as a clathrin-associated sorting protein (CLASP) required for clathrin-mediated endocytosis of selected cargo proteins. Can bind and assemble clathrin, and binds simultaneously to phosphatidylinositol 4,5-bisphosphate (PtdIns(4,5)P2) and cargos containing non-phosphorylated NPXY internalization motifs, such as the LDL receptor, to recruit them to clathrin-coated pits. Can function in clathrin-mediated endocytosis independently of the AP-2 complex. Involved in endocytosis of integrin beta-1; this function seems to redundant with the AP-2 complex and seems to require DAB2 binding to endocytosis accessory EH domain-containing proteins such as EPS15, EPS15L1 and ITSN1. Involved in endocytosis of cystic fibrosis transmembrane conductance regulator/CFTR. Involved in endocytosis of megalin/LRP2 lipoprotein receptor during embryonal development. Required for recycling of the TGF-beta receptor. Involved in CFTR trafficking to the late endosome. Involved in several receptor-mediated signaling pathways. Involved in TGF-beta receptor signaling and facilitates phosphorylation of the signal transducer SMAD2. Mediates TFG-beta-stimulated JNK activation. May inhibit the canoniocal Wnt/beta-catenin signaling pathway by stabilizing the beta-catenin destruction complex through a competing association with axin preventing its dephosphorylation through protein phosphatase 1 (PP1). Sequesters LRP6 towards clathrin-mediated endocytosis, leading to inhibition of Wnt/beta-catenin signaling. May activate non-canonical Wnt signaling. In cell surface growth factor/Ras signaling pathways proposed to inhibit ERK activation by interrupting the binding of GRB2 to SOS1 and to inhibit SRC by preventing its activating phosphorylation at 'Tyr-419'. Proposed to be involved in modulation of androgen receptor (AR) signaling mediated by SRC activation; seems to compete with AR for interaction with SRC. Plays a role in the CSF-1 signal transduction pathway. Plays a role in cellular differentiation. Involved in cell positioning and formation of visceral endoderm (VE) during embryogenesis and proposed to be required in the VE to respond to Nodal signaling coming from the epiblast. Required for the epithelial to mesenchymal transition, a process necessary for proper embryonic development. May be involved in myeloid cell differentiation and can induce macrophage adhesion and spreading. May act as a tumor suppressor. This chain is Disabled homolog 2 (DAB2), found in Homo sapiens (Human).